The sequence spans 316 residues: Probable cell division protein WhiA (316 aa).

Residues 275–309 (TLKELGEMVSGGKISKSGINHRLRKIDDIAEKLRA) constitute a DNA-binding region (H-T-H motif).

This sequence belongs to the WhiA family.

Its function is as follows. Involved in cell division and chromosome segregation. This Bacillus anthracis (strain CDC 684 / NRRL 3495) protein is Probable cell division protein WhiA.